The sequence spans 356 residues: Histidinol-phosphate aminotransferase (356 aa).

Residue Lys214 is modified to N6-(pyridoxal phosphate)lysine.

It belongs to the class-II pyridoxal-phosphate-dependent aminotransferase family. Histidinol-phosphate aminotransferase subfamily. Homodimer. Pyridoxal 5'-phosphate serves as cofactor.

It catalyses the reaction L-histidinol phosphate + 2-oxoglutarate = 3-(imidazol-4-yl)-2-oxopropyl phosphate + L-glutamate. The protein operates within amino-acid biosynthesis; L-histidine biosynthesis; L-histidine from 5-phospho-alpha-D-ribose 1-diphosphate: step 7/9. The polypeptide is Histidinol-phosphate aminotransferase (Aromatoleum aromaticum (strain DSM 19018 / LMG 30748 / EbN1) (Azoarcus sp. (strain EbN1))).